The primary structure comprises 890 residues: MSTSSSRLFFDCGSLDWPNKSLFGDPTTRDVMDEHISSTWNAVIRRHMLAPNADAETILGRDGLPSAQFDAYGAMLPSFIQALNAPTTRLRISAPLSTAESILCADASHAPWLYMANSVCAYEATHLQPVQTFIAFNFAHGYCYLSLFIPLSFRITPENARSFSRFLEQLPDILGAYPTLASLYKTMLFAVRLFPEVLQAPIPIIAKRPGVLQFHVSDARGLPPSWFPMKCGSVASFIALITNNLNSDLLNGIVGSNGDGEHYTNWNSGHNHWIVNRFITVKDLHSSLKSALEVDLDTEGGRNAVLDLLLDLGVTNLVRREKRFPAYFQGAESVYLLLSCERVGNELVAVQDALQEPLANYTGKDLRALIINLGGLPSRHPEICYTRNIFENDNHLVWNFEFYRIASITKNAQIDRDVLSSSMANLFSDFVSESSNGEYRVKEPRPVTQYRVEHDEPVASGAPSAWWQVLVGITTAILGAIIFFLWRCFLRAKRVKFQAKDSFPWFTTSGDDDLPPPPGDSPSRPPGRSPDRVLPRTVVRDLSFNDDDDLHSVDLNEAGSRFGEVVSLIARGNLRELAGAIPESLSNLTLLQTSASGSGFYTMVALYLATLGDAITAFHEHNDASPATIQSLRTLELQLEARGLRFNEAGTPANLIQRGVKSSVGRALVRLTQSALLATGENFRTRMAATLERIAAERLNTLTAYDQRVIEMTTELLAAIKTALEVERSELTPHLANAEALLQVYNNLFSTDYASASLLALRREMILRSAEGRVGEQPTSASDAANEELVQRSMTKLDKEIELFQAQIDSQRRAVTITEASNLRENILQPINTVANIAMAGAFLRGGARHRMPGIPDVAAPMSNPFRAFSGRGHSLTTTRGAGLFRRPRV.

One can recognise a Peptidase C6 domain in the interval 135 to 255; sequence AFNFAHGYCY…NSDLLNGIVG (121 aa). Active-site for helper component proteinase activity residues include Cys143 and His215. A disordered region spans residues 508-533; sequence TSGDDDLPPPPGDSPSRPPGRSPDRV. Positions 515-528 are enriched in pro residues; sequence PPPPGDSPSRPPGR.

Belongs to the bymoviruses polyprotein 2 family. The viral RNA2 of bymoviruses is expressed as a single polyprotein which undergoes post-translational proteolytic processing resulting in the production of at least two individual proteins. The HC-pro cleaves its C-terminus autocatalytically (Potential).

It catalyses the reaction Hydrolyzes a Gly-|-Gly bond at its own C-terminus, commonly in the sequence -Tyr-Xaa-Val-Gly-|-Gly, in the processing of the potyviral polyprotein.. In Barley yellow mosaic virus (isolate Germany) (BaYMV), this protein is Genome polyprotein 2 (RNA2).